Here is a 204-residue protein sequence, read N- to C-terminus: GTP cyclohydrolase 1 (204 aa).

Zn(2+) is bound by residues cysteine 92, histidine 95, and cysteine 165.

The protein belongs to the GTP cyclohydrolase I family. In terms of assembly, homomer.

The catalysed reaction is GTP + H2O = 7,8-dihydroneopterin 3'-triphosphate + formate + H(+). The protein operates within cofactor biosynthesis; 7,8-dihydroneopterin triphosphate biosynthesis; 7,8-dihydroneopterin triphosphate from GTP: step 1/1. In Mycobacteroides abscessus (strain ATCC 19977 / DSM 44196 / CCUG 20993 / CIP 104536 / JCM 13569 / NCTC 13031 / TMC 1543 / L948) (Mycobacterium abscessus), this protein is GTP cyclohydrolase 1.